The following is a 207-amino-acid chain: FMN-dependent NADH:quinone oxidoreductase 2 (207 aa).

FMN-binding positions include serine 10, 16–18 (SIS), 96–99 (MYNL), and 141–144 (SRGG).

The protein belongs to the azoreductase type 1 family. As to quaternary structure, homodimer. Requires FMN as cofactor.

The enzyme catalyses 2 a quinone + NADH + H(+) = 2 a 1,4-benzosemiquinone + NAD(+). It catalyses the reaction N,N-dimethyl-1,4-phenylenediamine + anthranilate + 2 NAD(+) = 2-(4-dimethylaminophenyl)diazenylbenzoate + 2 NADH + 2 H(+). Functionally, quinone reductase that provides resistance to thiol-specific stress caused by electrophilic quinones. Also exhibits azoreductase activity. Catalyzes the reductive cleavage of the azo bond in aromatic azo compounds to the corresponding amines. This is FMN-dependent NADH:quinone oxidoreductase 2 from Trichormus variabilis (strain ATCC 29413 / PCC 7937) (Anabaena variabilis).